The sequence spans 381 residues: Transcription termination factor 4, mitochondrial (381 aa).

A mitochondrion-targeting transit peptide spans 1–42; it reads MAAFGRQVLDWHRLIPLTWACMARQTPHLGEQRRTTASLLRK. MTERF repeat units follow at residues 142–172, 177–204, 209–239, 245–270, and 290–318; these read CVVL…LGLG, KRVL…LKEK, VQQV…YAYF, HPDI…YLER, and LKDI…VFKK. The dimerization with NSUN4 stretch occupies residues 310–327; the sequence is VEEFQVFKKLLAREEEES. The disordered stretch occupies residues 322–381; it reads REEEESESSTSDDKRASLDEDEDDDDEEDNDEDDNDEDDDDEDDDEAEDNDEDEDDDEEE. A compositionally biased stretch (acidic residues) spans 340 to 381; that stretch reads DEDEDDDDEEDNDEDDNDEDDDDEDDDEAEDNDEDEDDDEEE.

It belongs to the mTERF family. As to quaternary structure, heterodimer with NSUN4; this interaction may be required for NSUN4 recruitment to the mitochondrial large ribosomal subunit. Post-translationally, the mature mitochondrial protein exists in 2 forms differing at the level of their N-terminus, one is starting at residue 43 and the other at residue 48.

It is found in the mitochondrion. Its function is as follows. Regulator of mitochondrial ribosome biogenesis and translation. Binds to mitochondrial ribosomal RNAs 16S, 12S and 7S and targets NSUN4 RNA methyltransferase to the mitochondrial large ribosomal subunit (39S). The protein is Transcription termination factor 4, mitochondrial (MTERF4) of Homo sapiens (Human).